Here is an 804-residue protein sequence, read N- to C-terminus: Endoplasmin (804 aa).

The signal sequence occupies residues 1–21; that stretch reads MRALWVLGLCCVLLTFGSVRA. The SRT pseudosubstrate motif motif lies at 42–44; the sequence is SRT. An N-linked (GlcNAc...) asparagine glycan is attached at asparagine 62. The residue at position 64 (serine 64) is a Phosphoserine. Asparagine 107 carries an N-linked (GlcNAc...) asparagine glycan. The ATP site is built by asparagine 107, aspartate 149, and asparagine 162. Lysine 168 bears the N6-(2-hydroxyisobutyryl)lysine mark. Serine 172 carries the phosphoserine modification. An ATP-binding site is contributed by phenylalanine 199. An N-linked (GlcNAc...) asparagine glycan is attached at asparagine 217. The tract at residues 288-323 is disordered; that stretch reads TVEEPMEEEEAAKEEKEESDDEAAVEEEEEEKKPKT. Acidic residues predominate over residues 289–317; the sequence is VEEPMEEEEAAKEEKEESDDEAAVEEEEE. A phosphoserine mark is found at serine 306 and serine 403. Lysine 404 carries the N6-succinyllysine modification. N-linked (GlcNAc...) asparagine glycosylation is present at asparagine 445. Serine 447 is modified (phosphoserine). The residue at position 479 (lysine 479) is an N6-acetyllysine. 2 N-linked (GlcNAc...) asparagine glycosylation sites follow: asparagine 481 and asparagine 502. Lysine 633 bears the N6-succinyllysine mark. The interval 750-804 is disordered; it reads DPDAKVEEEPEEEPEETTEDTTEDTEQDDDEEMDAGADEEEQETSETSTAEKDEL. The span at 757-793 shows a compositional bias: acidic residues; it reads EEPEEEPEETTEDTTEDTEQDDDEEMDAGADEEEQET. The Prevents secretion from ER motif lies at 801-804; the sequence is KDEL.

The protein belongs to the heat shock protein 90 family. In terms of assembly, homodimer; disulfide-linked. Component of an EIF2 complex at least composed of CELF1/CUGBP1, CALR, CALR3, EIF2S1, EIF2S2, HSP90B1 and HSPA5. Part of a large chaperone multiprotein complex comprising DNAJB11, HSP90B1, HSPA5, HYOU, PDIA2, PDIA4, PDIA6, PPIB, SDF2L1, UGGT1 and very small amounts of ERP29, but not, or at very low levels, CALR nor CANX. Interacts with AIMP1; regulates its retention in the endoplasmic reticulum. Hyperglycosylated form interacts with OS9; promoting its degradation by the endoplasmic reticulum associated degradation (ERAD). Interacts with CNPY3. This interaction is disrupted in the presence of ATP. Interacts with TLR4 and TLR9, but not with TLR3. Interacts with MZB1 in a calcium-dependent manner. Interacts with METTL23. Interacts with IL1B; the interaction facilitates cargo translocation into the ERGIC. Interacts with EIF2AK3. In terms of processing, phosphorylated by CK2. N-glycosylated cotranslationally at Asn-217 by STT3A-containing OST-A complex: this glycosylation is constitutive. In response to various stress, 5 additional facultative sites (Asn-62, Asn-107, Asn-445, Asn-481 and Asn-502) can be glycosylated post-translationally by STT3B-containing OST-B complex, leading to a hyperglycosylated form that is degraded by the ER-associated degradation (ERAD) pathway. In normal conditions, the OST-A complex together with CCDC134 prevent glycosylation at facultative sites during protein folding, thereby preventing hyperglycosylation. Mechanistically, nascent HSP90B1 is tethered during translation to a specialized CCDC134-containing translocon that forms a microenvironment for its folding, in which STT3A associates with the SRT pseudosubstrate motif, and prevents access to facultative glycosylation sites until folding is completed, rendering its facultative sites inaccessible to the OST-B complex.

Its subcellular location is the endoplasmic reticulum lumen. It localises to the sarcoplasmic reticulum lumen. It is found in the melanosome. The enzyme catalyses ATP + H2O = ADP + phosphate + H(+). Its function is as follows. ATP-dependent chaperone involved in the processing of proteins in the endoplasmic reticulum, regulating their transport. Together with MESD, acts as a modulator of the Wnt pathway by promoting the folding of LRP6, a coreceptor of the canonical Wnt pathway. When associated with CNPY3, required for proper folding of Toll-like receptors. Promotes folding and trafficking of TLR4 to the cell surface. May participate in the unfolding of cytosolic leaderless cargos (lacking the secretion signal sequence) such as the interleukin 1/IL-1 to facilitate their translocation into the ERGIC (endoplasmic reticulum-Golgi intermediate compartment) and secretion; the translocation process is mediated by the cargo receptor TMED10. The chain is Endoplasmin (HSP90B1) from Sus scrofa (Pig).